We begin with the raw amino-acid sequence, 352 residues long: uncharacterized protein (352 aa).

3 N-linked (GlcNAc...) asparagine glycosylation sites follow: asparagine 14, asparagine 52, and asparagine 70. The interval leucine 41–lysine 73 is disordered. A compositionally biased stretch (low complexity) spans threonine 50–serine 72. The helical transmembrane segment at isoleucine 131–phenylalanine 151 threads the bilayer. N-linked (GlcNAc...) asparagine glycosylation is found at asparagine 165, asparagine 186, asparagine 192, asparagine 193, asparagine 203, and asparagine 289. Low complexity predominate over residues asparagine 193–asparagine 213. A disordered region spans residues asparagine 193–asparagine 219.

The protein resides in the membrane. This is an uncharacterized protein from Dictyostelium discoideum (Social amoeba).